The sequence spans 227 residues: Mitochondrial inner membrane protease ATP23 (227 aa).

His-124 serves as a coordination point for a divalent metal cation. Glu-125 is an active-site residue. His-128 is a binding site for a divalent metal cation.

Belongs to the peptidase M76 family. As to quaternary structure, interacts with ATP6.

The protein localises to the mitochondrion inner membrane. Functionally, has a dual role in the assembly of mitochondrial ATPase. Acts as a protease that removes the N-terminal 10 residues of mitochondrial ATPase CF(0) subunit 6 (ATP6) at the intermembrane space side. Also involved in the correct assembly of the membrane-embedded ATPase CF(0) particle, probably mediating association of ATP6 with the subunit 9 ring. The chain is Mitochondrial inner membrane protease ATP23 (ATP23) from Saccharomyces cerevisiae (strain YJM789) (Baker's yeast).